Consider the following 608-residue polypeptide: Coilin (608 aa).

The tract at residues 134 to 272 is disordered; that stretch reads KETGGYESES…RKKAKRQWLR (139 aa). Positions 141–155 are enriched in acidic residues; it reads SESEEDELEEEAEEF. The span at 161 to 179 shows a compositional bias: basic residues; sequence ASKKRKTSSKNQSTKRKKC. The Nuclear localization signal 1 signature appears at 163-170; it reads KKRKTSSK. Ser187 carries the post-translational modification Phosphoserine. The span at 211–228 shows a compositional bias: polar residues; sequence DVQSANNDEQNNDSTKPM. Positions 235-245 are enriched in basic and acidic residues; it reads SQQEESKEHND. The Nuclear localization signal 2 signature appears at 253–260; that stretch reads TKKTPSRS. Residues 256–269 show a composition bias toward basic residues; the sequence is TPSRSARRKKAKRQ. Residues 410 to 510 form the Tudor; atypical domain; it reads YEQLVAYTGS…LLDVRSVKTS (101 aa). The tract at residues 513–585 is disordered; the sequence is DSAEVAKSAL…KKGSSSGGSW (73 aa). Low complexity predominate over residues 558 to 585; the sequence is EALSAKKAALSQANNGWNKKGSSSGGSW.

This sequence belongs to the coilin family. In terms of assembly, homooligomer. Interaction with RNA results in multimerization due to structural alteration in the NOD domain.

Its subcellular location is the nucleus. The protein localises to the cajal body. In terms of biological role, probable component of nuclear coiled bodies, also known as Cajal bodies or CBs, which are involved in the modification and assembly of nucleoplasmic snRNPs. Required for CBs formation. Binds snRNAs and non-specific artificial RNA via the N-terminal part of the NOD domain and via the NLS2 region (212-282) of the IDD domain. The two sites are able to function independently and provide effective RNA-binding in a non-cooperative manner. The sequence is that of Coilin from Arabidopsis thaliana (Mouse-ear cress).